The sequence spans 350 residues: MESAFIIEKSVVIVVVFAVTMIMAMYSTWAERKVAAFLQDRVGPNRAGWGGLLQPLADGMKLFSKEEFFPNTPNRFLFVVGPAIAMSTALMTSAVIPWGDRLHLFGKDIILQATDVNIALLYIFGVLSVGVYGIMIGGWASNNKFSLMGAVRAASQMVSYEIAMGLSMIALLMMTGTMSLKVISEQQAGMNWNVFYQPLSFLIFLICSFAETNRTPFDLAECENELIGGYHTEYSSMKMGFYLFAEYASMFISSTIISVLFFGGYNYPGMQWMVDNVGVNTANLLGIAVLFVKICFFIFFYMWVRWTIPRFRYDQLMNLGWRILIPLSIINIMITGAVILRHDIAAALGF.

Helical transmembrane passes span 5–25 (FIIEKSVVIVVVFAVTMIMAM), 76–96 (FLFVVGPAIAMSTALMTSAVI), 118–138 (IALLYIFGVLSVGVYGIMIGG), 162–182 (IAMGLSMIALLMMTGTMSLKV), 190–210 (MNWNVFYQPLSFLIFLICSFA), 243–263 (LFAEYASMFISSTIISVLFFG), 284–304 (LLGIAVLFVKICFFIFFYMWV), and 319–339 (LGWRILIPLSIINIMITGAVI).

The protein belongs to the complex I subunit 1 family. NDH-1 is composed of 14 different subunits. Subunits NuoA, H, J, K, L, M, N constitute the membrane sector of the complex.

Its subcellular location is the cell inner membrane. The enzyme catalyses a quinone + NADH + 5 H(+)(in) = a quinol + NAD(+) + 4 H(+)(out). Functionally, NDH-1 shuttles electrons from NADH, via FMN and iron-sulfur (Fe-S) centers, to quinones in the respiratory chain. The immediate electron acceptor for the enzyme in this species is believed to be ubiquinone. Couples the redox reaction to proton translocation (for every two electrons transferred, four hydrogen ions are translocated across the cytoplasmic membrane), and thus conserves the redox energy in a proton gradient. This subunit may bind ubiquinone. This is NADH-quinone oxidoreductase subunit H from Flavobacterium johnsoniae (strain ATCC 17061 / DSM 2064 / JCM 8514 / BCRC 14874 / CCUG 350202 / NBRC 14942 / NCIMB 11054 / UW101) (Cytophaga johnsonae).